We begin with the raw amino-acid sequence, 551 residues long: Arginine--tRNA ligase (551 aa).

A 'HIGH' region motif is present at residues 125-135 (ANPTGPLHIGH).

This sequence belongs to the class-I aminoacyl-tRNA synthetase family. As to quaternary structure, monomer.

The protein resides in the cytoplasm. The enzyme catalyses tRNA(Arg) + L-arginine + ATP = L-arginyl-tRNA(Arg) + AMP + diphosphate. The protein is Arginine--tRNA ligase of Nitratidesulfovibrio vulgaris (strain DP4) (Desulfovibrio vulgaris).